The sequence spans 509 residues: ATP synthase subunit alpha (509 aa).

Position 169–176 (169–176) interacts with ATP; the sequence is GDRQTGKT.

It belongs to the ATPase alpha/beta chains family. As to quaternary structure, F-type ATPases have 2 components, CF(1) - the catalytic core - and CF(0) - the membrane proton channel. CF(1) has five subunits: alpha(3), beta(3), gamma(1), delta(1), epsilon(1). CF(0) has three main subunits: a(1), b(2) and c(9-12). The alpha and beta chains form an alternating ring which encloses part of the gamma chain. CF(1) is attached to CF(0) by a central stalk formed by the gamma and epsilon chains, while a peripheral stalk is formed by the delta and b chains.

The protein localises to the cell inner membrane. The enzyme catalyses ATP + H2O + 4 H(+)(in) = ADP + phosphate + 5 H(+)(out). Its function is as follows. Produces ATP from ADP in the presence of a proton gradient across the membrane. The alpha chain is a regulatory subunit. This is ATP synthase subunit alpha from Methylorubrum extorquens (strain CM4 / NCIMB 13688) (Methylobacterium extorquens).